Here is a 271-residue protein sequence, read N- to C-terminus: MASEFKKKIFWRAVVAEFLAMTLFIFISIGSALGFQYPVRNNQTSGAAQDNVKVSLAFGLSIATLAQSVGHISGAHLNPAVTLGLLLSCQISVLRAVMYIIAQCVGAIVATAILSGITSSLPGNSLGLNSLAPGVDSGQGLGIEIIGTLQLVLCVLATTDRRRRDLGGSAPLAIGFSVALGHLLAIDYTGCGINPARSFGSAVITHNFQDHWVFWVGPFIGGALAVLIYDFILAPRSSDLTDRVKVWTSGQVEEYDLDGDDINSRVEMKPK.

Residues 1–11 (MASEFKKKIFW) lie on the Cytoplasmic side of the membrane. Residues 12–29 (RAVVAEFLAMTLFIFISI) form a helical membrane-spanning segment. Residues 30–48 (GSALGFQYPVRNNQTSGAA) are Extracellular-facing. Residue asparagine 42 is glycosylated (N-linked (GlcNAc...) asparagine). Residues 49 to 67 (QDNVKVSLAFGLSIATLAQ) form a helical membrane-spanning segment. The Cytoplasmic portion of the chain corresponds to 68–70 (SVG). An intramembrane segment occupies 71–84 (HISGAHLNPAVTLG). Positions 78–80 (NPA) match the NPA 1 motif. The Cytoplasmic portion of the chain corresponds to 85–92 (LLLSCQIS). A helical membrane pass occupies residues 93 to 111 (VLRAVMYIIAQCVGAIVAT). Topologically, residues 112-135 (AILSGITSSLPGNSLGLNSLAPGV) are extracellular. A helical membrane pass occupies residues 136 to 155 (DSGQGLGIEIIGTLQLVLCV). Residues 156–165 (LATTDRRRRD) lie on the Cytoplasmic side of the membrane. Residues 166–183 (LGGSAPLAIGFSVALGHL) form a helical membrane-spanning segment. Residues 184 to 188 (LAIDY) lie on the Extracellular side of the membrane. Residues 189-201 (TGCGINPARSFGS) lie within the membrane without spanning it. The NPA 2 signature appears at 194–196 (NPA). Residues 202–208 (AVITHNF) are Extracellular-facing. A helical transmembrane segment spans residues 209–226 (QDHWVFWVGPFIGGALAV). Residues 227 to 271 (LIYDFILAPRSSDLTDRVKVWTSGQVEEYDLDGDDINSRVEMKPK) lie on the Cytoplasmic side of the membrane. Serine 249 is subject to Phosphoserine. A Phosphotyrosine modification is found at tyrosine 255. A Phosphoserine modification is found at serine 264.

Belongs to the MIP/aquaporin (TC 1.A.8) family. As to quaternary structure, homotetramer; each monomer provides an independent water pore. Component of the ankyrin-1 complex in the erythrocyte, composed of ANK1, RHCE, RHAG, SLC4A1, EPB42, GYPA, GYPB and AQP1. Interacts with EPHB2; involved in endolymph production in the inner ear. Identified in a complex with STOM. Interacts (via the N-terminal) with ANK1 (via ANK 1-5 repeats). Interacts (via the C-terminal) with EPB42.

It is found in the cell membrane. The enzyme catalyses H2O(in) = H2O(out). It carries out the reaction nitric oxide(out) = nitric oxide(in). The catalysed reaction is CO2(out) = CO2(in). It catalyses the reaction glycerol(in) = glycerol(out). The enzyme catalyses H2O2(out) = H2O2(in). It carries out the reaction K(+)(in) = K(+)(out). The catalysed reaction is Na(+)(in) = Na(+)(out). Its function is as follows. Forms a water channel that facilitates the transport of water across cell membranes, playing a crucial role in water homeostasis in various tissues. Could also be permeable to small solutes including hydrogen peroxide, glycerol and gases such as amonnia (NH3), nitric oxide (NO) and carbon dioxide (CO2). Recruited to the ankyrin-1 complex, a multiprotein complex of the erythrocyte membrane, it could be part of a CO2 metabolon, linking facilitated diffusion of CO2 across the membrane, anion exchange of Cl(-)/HCO3(-) and interconversion of dissolved CO2 and carbonic acid in the cytosol. In vitro, it shows non-selective gated cation channel activity and may be permeable to cations like K(+) and Na(+) in vivo. The chain is Aquaporin-1 from Sus scrofa (Pig).